The sequence spans 431 residues: Isochorismate synthase MenF (431 aa).

The active-site Proton acceptor is lysine 183. The active-site Proton donor is glutamate 233. Residues glutamate 277 and glutamate 414 each contribute to the Mg(2+) site.

The protein belongs to the isochorismate synthase family. The cofactor is Mg(2+).

The enzyme catalyses chorismate = isochorismate. Its pathway is quinol/quinone metabolism; 1,4-dihydroxy-2-naphthoate biosynthesis; 1,4-dihydroxy-2-naphthoate from chorismate: step 1/7. It participates in quinol/quinone metabolism; menaquinone biosynthesis. In terms of biological role, catalyzes the conversion of chorismate to isochorismate. The chain is Isochorismate synthase MenF from Pasteurella multocida (strain Pm70).